Consider the following 84-residue polypeptide: Putative defensin-like protein 38 (84 aa).

A signal peptide spans 1-26 (MASSKNGTVLFVSLMILLLISTGVKA). Disulfide bonds link C28-C84, C41-C65, C50-C76, and C54-C78.

Belongs to the DEFL family.

It is found in the secreted. This is Putative defensin-like protein 38 from Arabidopsis thaliana (Mouse-ear cress).